A 503-amino-acid chain; its full sequence is Probable cytosol aminopeptidase (503 aa).

Mn(2+) is bound by residues Lys270 and Asp275. Lys282 is an active-site residue. Mn(2+) is bound by residues Asp293, Asp352, and Glu354. Arg356 is an active-site residue.

Belongs to the peptidase M17 family. The cofactor is Mn(2+).

Its subcellular location is the cytoplasm. The enzyme catalyses Release of an N-terminal amino acid, Xaa-|-Yaa-, in which Xaa is preferably Leu, but may be other amino acids including Pro although not Arg or Lys, and Yaa may be Pro. Amino acid amides and methyl esters are also readily hydrolyzed, but rates on arylamides are exceedingly low.. The catalysed reaction is Release of an N-terminal amino acid, preferentially leucine, but not glutamic or aspartic acids.. Its function is as follows. Presumably involved in the processing and regular turnover of intracellular proteins. Catalyzes the removal of unsubstituted N-terminal amino acids from various peptides. The chain is Probable cytosol aminopeptidase from Erwinia tasmaniensis (strain DSM 17950 / CFBP 7177 / CIP 109463 / NCPPB 4357 / Et1/99).